The following is a 1248-amino-acid chain: Structural polyprotein (1248 aa).

Residues 1–10 (MEFIPTQTFY) show a composition bias toward polar residues. The segment at 1–104 (MEFIPTQTFY…KKKKPGRRER (104 aa)) is disordered. Low complexity predominate over residues 22-44 (RPTIQVIRPRPRPQRQAGQLAQL). A host transcription inhibition region spans residues 36 to 68 (RQAGQLAQLISAVNKLTMRAVPQQKPRRNRKNK). Over residues 60–72 (KPRRNRKNKKQKQ) the composition is skewed to basic residues. Positions 61-99 (PRRNRKNKKQKQKQQAPQNNTNQKKQPPKKKPAQKKKKP) match the Nuclear localization signal motif. Residues 73-85 (KQQAPQNNTNQKK) show a composition bias toward low complexity. The segment at 84 to 114 (KKQPPKKKPAQKKKKPGRRERMCMKIENDCI) is binding to the viral RNA. A compositionally biased stretch (basic residues) spans 86-101 (QPPKKKPAQKKKKPGR). The interval 99–113 (PGRRERMCMKIENDC) is ribosome-binding. The cysteines at positions 113 and 128 are disulfide-linked. The Peptidase S3 domain occupies 113-261 (CIFEVKHEGK…KITPEGAEEW (149 aa)). Residue histidine 139 is the Charge relay system of the active site. The Nuclear export signal signature appears at 144 to 154 (IDNADLAKLAF). Positions 155-160 (KRSSKY) are interaction with spike glycoprotein E2. Aspartate 161 acts as the Charge relay system in catalysis. The tract at residues 183–193 (PEGYYNWHHGA) is dimerization of the capsid protein. The active-site Charge relay system is serine 213. Positions 219–223 (DNKGR) are dimerization of the capsid protein. Residues 262-274 (SLAIPVMCLLANT) are functions as an uncleaved signal peptide for the precursor of protein E3/E2. The Extracellular portion of the chain corresponds to 262 to 692 (SLAIPVMCLL…YYYELYPTMT (431 aa)). Intrachain disulfides connect cysteine 269–cysteine 278, cysteine 283–cysteine 287, cysteine 286–cysteine 318, cysteine 344–cysteine 450, cysteine 347–cysteine 353, cysteine 416–cysteine 430, cysteine 478–cysteine 591, cysteine 526–cysteine 550, and cysteine 528–cysteine 545. N-linked (GlcNAc...) asparagine; by host glycosylation occurs at asparagine 273. 2 interaction with host Mxra8 receptor regions span residues 351 to 354 (HSCH) and 387 to 389 (HDW). Interaction with host Mxra8 receptor regions lie at residues 509 to 512 (QSGN) and 541 to 547 (VINNCKV). Residues asparagine 588 and asparagine 670 are each glycosylated (N-linked (GlcNAc...) asparagine; by host). A helical membrane pass occupies residues 693–713 (VVVVSVASFILLSMVGMAVGM). Residues 714–748 (CMCARRRCITPYELTPGATVPFLLSLICCIRTAKA) are Cytoplasmic-facing. The interval 716-720 (CARRR) is interaction with the capsid protein. S-palmitoyl cysteine; by host attachment occurs at residues cysteine 721, cysteine 741, and cysteine 742. The interval 721-741 (CITPYELTPGATVPFLLSLIC) is transient transmembrane before p62-6K protein processing. The cysteines at positions 721 and 742 are disulfide-linked. The Extracellular segment spans residues 749 to 763 (ATYQEAAVYLWNEQQ). Residues 764 to 784 (PLFWLQALIPLAALIVLCNCL) form a helical membrane-spanning segment. At 785–795 (RLLPCCCKTLA) the chain is on the cytoplasmic side. Residues 796–816 (FLAVMSIGAHTVSAYEHVTVI) traverse the membrane as a helical segment. The Extracellular segment spans residues 817-1224 (PNTVGVPYKT…AMSWVQKITG (408 aa)). Cystine bridges form between cysteine 858-cysteine 923, cysteine 871-cysteine 903, cysteine 872-cysteine 905, and cysteine 877-cysteine 887. An E1 fusion peptide loop region spans residues 893–910 (VYPFMWGGAYCFCDAENT). N-linked (GlcNAc...) asparagine; by host glycans are attached at residues asparagine 950 and asparagine 1079. Cystine bridges form between cysteine 1068–cysteine 1080, cysteine 1110–cysteine 1185, cysteine 1115–cysteine 1189, and cysteine 1137–cysteine 1179. The helical transmembrane segment at 1225 to 1245 (GVGLVVAVAALILIVVLCVSF) threads the bilayer. Cysteine 1242 carries the S-palmitoyl cysteine; by host lipid modification. Cysteine 1242 carries the S-stearoyl cysteine; by host lipid modification. The Cytoplasmic segment spans residues 1246–1248 (SRH).

The protein belongs to the alphavirus structural polyprotein family. As to quaternary structure, homodimer. Homomultimer. Interacts with host karyopherin KPNA4; this interaction allows the nuclear import of the viral capsid protein. Interacts with spike glycoprotein E2. Interacts with host IRAK1; the interaction leads to inhibition of IRAK1-dependent signaling. The precursor of protein E3/E2 and E1 form a heterodimer shortly after synthesis. In terms of assembly, interacts with spike glycoprotein E2. The precursor of protein E3/E2 and E1 form a heterodimer shortly after synthesis. Processing of the precursor of protein E3/E2 into E2 and E3 results in a heterodimer of the spike glycoproteins E2 and E1. Spike at virion surface are constituted of three E2-E1 heterodimers. After target cell attachment and endocytosis, E1 changes conformation to form homotrimers. Interacts with 6K protein. Interacts with host MXRA8; this interaction mediates virus entry. The interaction involves 2 adjacent E2-E1 heterodimers. As to quaternary structure, interacts with spike glycoprotein E1. Processing of the precursor of protein E3/E2 into E2 and E3 results in a heterodimer of the spike glycoproteins E2 and E1. Spike at virion surface are constituted of a trimer of E2-E1 heterodimers. Interacts with 6K protein. Interacts with host MXRA8; this interaction mediates virus entry. The interaction involves 2 adjacent E2-E1 heterodimers. Oligomer. Interacts with spike glycoprotein E1. Interacts with spike glycoprotein E2. In terms of processing, specific enzymatic cleavages in vivo yield mature proteins. Capsid protein is auto-cleaved during polyprotein translation, unmasking a signal peptide at the N-terminus of the precursor of E3/E2. The remaining polyprotein is then targeted to the host endoplasmic reticulum, where host signal peptidase cleaves it into pE2, 6K and E1 proteins. pE2 is further processed to mature E3 and E2 by host furin in trans-Golgi vesicle. Palmitoylated via thioester bonds. These palmitoylations may induce disruption of the C-terminus transmembrane. This would result in the reorientation of E2 C-terminus from lumenal to cytoplasmic side. Post-translationally, N-glycosylated. In terms of processing, palmitoylated via thioester bonds.

The protein resides in the virion. It localises to the host cytoplasm. Its subcellular location is the host cell membrane. The protein localises to the host nucleus. It is found in the virion membrane. The protein resides in the host Golgi apparatus. It localises to the host trans-Golgi network. Its subcellular location is the host endoplasmic reticulum. It carries out the reaction Autocatalytic release of the core protein from the N-terminus of the togavirus structural polyprotein by hydrolysis of a -Trp-|-Ser- bond.. In terms of biological role, forms an icosahedral capsid with a T=4 symmetry composed of 240 copies of the capsid protein surrounded by a lipid membrane through which penetrate 80 spikes composed of trimers of E1-E2 heterodimers. The capsid protein binds to the viral RNA genome at a site adjacent to a ribosome binding site for viral genome translation following genome release. Possesses a protease activity that results in its autocatalytic cleavage from the nascent structural protein. Following its self-cleavage, the capsid protein transiently associates with ribosomes, and within several minutes the protein binds to viral RNA and rapidly assembles into icosahedric core particles. The resulting nucleocapsid eventually associates with the cytoplasmic domain of the spike glycoprotein E2 at the cell membrane, leading to budding and formation of mature virions. In case of infection, new virions attach to target cells and after clathrin-mediated endocytosis their membrane fuses with the host endosomal membrane. This leads to the release of the nucleocapsid into the cytoplasm, followed by an uncoating event necessary for the genomic RNA to become accessible. The uncoating might be triggered by the interaction of capsid proteins with ribosomes. Binding of ribosomes would release the genomic RNA since the same region is genomic RNA-binding and ribosome-binding. Specifically inhibits interleukin-1 receptor-associated kinase 1/IRAK1-dependent signaling during viral entry, representing a means by which the alphaviruses may evade innate immune detection and activation prior to viral gene expression. Degrades host cyclic GMP-AMP synthase (CGAS) thereby inhibiting the cGAS-STING pathway. Functionally, provides the signal sequence for the translocation of the precursor of protein E3/E2 to the host endoplasmic reticulum. Furin-cleaved E3 remains associated with spike glycoprotein E1 and mediates pH protection of the latter during the transport via the secretory pathway. After virion release from the host cell, the assembly protein E3 is gradually released in the extracellular space. Plays a role in viral attachment to target host cell, by binding to the cell receptor MXRA8. Synthesized as a p62 precursor which is processed by furin at the cell membrane just before virion budding, giving rise to E2-E1 heterodimer. The p62-E1 heterodimer is stable, whereas E2-E1 is unstable and dissociate at low pH. p62 is processed at the last step, presumably to avoid E1 fusion activation before its final export to cell surface. E2 C-terminus contains a transitory transmembrane that would be disrupted by palmitoylation, resulting in reorientation of the C-terminal tail from lumenal to cytoplasmic side. This step is critical since E2 C-terminus is involved in budding by interacting with capsid proteins. This release of E2 C-terminus in cytoplasm occurs lately in protein export, and precludes premature assembly of particles at the endoplasmic reticulum membrane. Its function is as follows. Acts as a viroporin that participates in virus glycoprotein processing and transport to the plasma membrane, cell permeabilization and budding of viral particles. Disrupts the calcium homeostasis of the cell, probably at the endoplasmic reticulum level. This leads to cytoplasmic calcium elevation. Because of its lipophilic properties, the 6K protein is postulated to influence the selection of lipids that interact with the transmembrane domains of the glycoproteins, which, in turn, affects the deformability of the bilayer required for the extreme curvature that occurs as budding proceeds. Present in low amount in virions, about 3% compared to viral glycoproteins. In terms of biological role, class II viral fusion protein. Fusion activity is inactive as long as E1 is bound to E2 in mature virion. After virus attachment to target cell and endocytosis, acidification of the endosome induce dissociation of E1/E2 heterodimer and concomitant trimerization of the E1 subunits. This E1 trimer is fusion active, and promotes release of viral nucleocapsid in cytoplasm after endosome and viral membrane fusion. Efficient fusion requires the presence of cholesterol and sphingolipid in the target membrane. This is Structural polyprotein from Chikungunya virus (strain S27-African prototype) (CHIKV).